A 179-amino-acid chain; its full sequence is Large ribosomal subunit protein uL5 (179 aa).

This sequence belongs to the universal ribosomal protein uL5 family. Part of the 50S ribosomal subunit; part of the 5S rRNA/L5/L18/L25 subcomplex. Contacts the 5S rRNA and the P site tRNA. Forms a bridge to the 30S subunit in the 70S ribosome.

Functionally, this is one of the proteins that bind and probably mediate the attachment of the 5S RNA into the large ribosomal subunit, where it forms part of the central protuberance. In the 70S ribosome it contacts protein S13 of the 30S subunit (bridge B1b), connecting the 2 subunits; this bridge is implicated in subunit movement. Contacts the P site tRNA; the 5S rRNA and some of its associated proteins might help stabilize positioning of ribosome-bound tRNAs. The protein is Large ribosomal subunit protein uL5 of Herpetosiphon aurantiacus (strain ATCC 23779 / DSM 785 / 114-95).